A 2273-amino-acid chain; its full sequence is Acetyl-CoA carboxylase, mitochondrial (2273 aa).

Residues 1 to 104 (KGKTITHGQS…RGNIHKHTRL (104 aa)) constitute a mitochondrion transit peptide. Residues 134-635 (VISKILIANN…STGWLDDLIL (502 aa)) enclose the Biotin carboxylation domain. The region spanning 292 to 484 (KTNFVSVPDD…LPATQLQIAM (193 aa)) is the ATP-grasp domain. 332 to 337 (GGGGKG) provides a ligand contact to ATP. Residue R459 is part of the active site. The Biotinyl-binding domain maps to 763–837 (LEAELNPTQV…EAGDVIAKLT (75 aa)). K804 carries the N6-biotinyllysine modification. The 336-residue stretch at 1532-1867 (PYSVKDWLQP…KRDMSPPLLE (336 aa)) folds into the CoA carboxyltransferase N-terminal domain. Residues 1532-2187 (PYSVKDWLQP…EGQVIKRLQK (656 aa)) are carboxyltransferase. CoA-binding residues include R1776, K2080, and R2082. The 317-residue stretch at 1871-2187 (RWDRDVDFKP…EGQVIKRLQK (317 aa)) folds into the CoA carboxyltransferase C-terminal domain.

Biotin serves as cofactor.

Its subcellular location is the mitochondrion. The catalysed reaction is hydrogencarbonate + acetyl-CoA + ATP = malonyl-CoA + ADP + phosphate + H(+). The enzyme catalyses N(6)-biotinyl-L-lysyl-[protein] + hydrogencarbonate + ATP = N(6)-carboxybiotinyl-L-lysyl-[protein] + ADP + phosphate + H(+). It functions in the pathway lipid metabolism; malonyl-CoA biosynthesis; malonyl-CoA from acetyl-CoA: step 1/1. In terms of biological role, catalyzes the rate-limiting reaction in the mitochondrial fatty acid synthesis (FAS) type II pathway. Responsible for the production of the mitochondrial malonyl-CoA, used for the biosynthesis of the cofactor lipoic acid. This protein carries three functions: biotin carboxyl carrier protein, biotin carboxylase, and carboxyltransferase. The sequence is that of Acetyl-CoA carboxylase, mitochondrial (HFA1) from Saccharomyces cerevisiae (strain YJM789) (Baker's yeast).